We begin with the raw amino-acid sequence, 302 residues long: Ribonucleoside-diphosphate reductase small subunit (302 aa).

The Fe cation site is built by glutamate 61, glutamate 91, and histidine 94. The active site involves tyrosine 98. The chain crosses the membrane as a helical span at residues isoleucine 147–leucine 167. The Fe cation site is built by glutamate 154, glutamate 188, and histidine 191.

Belongs to the ribonucleoside diphosphate reductase small chain family. In terms of assembly, heterotetramer composed of a homodimer of the large subunit (R1) and a homodimer of the small subunit (R2). Larger multisubunit protein complex are also active, composed of (R1)n(R2)n. The cofactor is Fe cation.

The protein localises to the host membrane. It carries out the reaction a 2'-deoxyribonucleoside 5'-diphosphate + [thioredoxin]-disulfide + H2O = a ribonucleoside 5'-diphosphate + [thioredoxin]-dithiol. Functionally, ribonucleoside-diphosphate reductase holoenzyme provides the precursors necessary for viral DNA synthesis. Allows virus growth in non-dividing cells, as well as reactivation from latency in infected hosts. Catalyzes the biosynthesis of deoxyribonucleotides from the corresponding ribonucleotides. The chain is Ribonucleoside-diphosphate reductase small subunit from Homo sapiens (Human).